A 376-amino-acid polypeptide reads, in one-letter code: ATP phosphoribosyltransferase regulatory subunit (376 aa).

The protein belongs to the class-II aminoacyl-tRNA synthetase family. HisZ subfamily. As to quaternary structure, heteromultimer composed of HisG and HisZ subunits.

The protein resides in the cytoplasm. Its pathway is amino-acid biosynthesis; L-histidine biosynthesis; L-histidine from 5-phospho-alpha-D-ribose 1-diphosphate: step 1/9. Its function is as follows. Required for the first step of histidine biosynthesis. May allow the feedback regulation of ATP phosphoribosyltransferase activity by histidine. This Brucella ovis (strain ATCC 25840 / 63/290 / NCTC 10512) protein is ATP phosphoribosyltransferase regulatory subunit.